A 415-amino-acid polypeptide reads, in one-letter code: Polyketide biosynthesis malonyl-ACP decarboxylase PksF (415 aa).

The 402-residue stretch at 6–407 folds into the Ketosynthase family 3 (KS3) domain; that stretch reads LPEVVVTGVG…GMNTAVCIQN (402 aa).

Belongs to the thiolase-like superfamily. Beta-ketoacyl-ACP synthases family.

Its subcellular location is the cytoplasm. It carries out the reaction malonyl-[ACP] + H(+) = acetyl-[ACP] + CO2. It participates in antibiotic biosynthesis; bacillaene biosynthesis. Its function is as follows. Involved in some intermediate steps for the synthesis of the antibiotic polyketide bacillaene which is involved in secondary metabolism. It decarboxylates selectively the malonyl group attached on the acyl-carrier-protein AcpK (Mal-AcpK). The protein is Polyketide biosynthesis malonyl-ACP decarboxylase PksF (pksF) of Bacillus subtilis (strain 168).